Reading from the N-terminus, the 211-residue chain is 5,6-dimethylbenzimidazole synthase (211 aa).

FMN-binding positions include 22-26 (RRDVR), serine 50, leucine 99, and serine 158.

It belongs to the BluB family. Homooctamer.

It catalyses the reaction FMNH2 + O2 = dialurate + 5,6-dimethylbenzimidazole + D-erythrose 4-phosphate + H(+). Its function is as follows. Involved in the biosynthesis of cobalamin (vitamin B12). Catalyzes the oxidative fragmentation and contraction of the isoalloxazine heterocycle and the cleavage of the ribityl tail of FMNH(2) to form 5,6-dimethylbenzimidazole (DMB) and D-erythrose 4-phosphate (E4P). NAD(P)H is only required initially to reduce FMN and oxygen drives the oxidative fragmentation. The polypeptide is 5,6-dimethylbenzimidazole synthase (Rhodospirillum rubrum (strain ATCC 11170 / ATH 1.1.1 / DSM 467 / LMG 4362 / NCIMB 8255 / S1)).